A 473-amino-acid polypeptide reads, in one-letter code: Transposase for insertion sequence element IS1151 (473 aa).

It belongs to the transposase 11 family.

Functionally, involved in the transposition of the insertion sequence. The polypeptide is Transposase for insertion sequence element IS1151 (tnp) (Clostridium perfringens).